The following is a 576-amino-acid chain: K(+)/H(+) antiporter NhaP2 (576 aa).

Helical transmembrane passes span 6 to 26, 34 to 54, 58 to 78, 87 to 107, 109 to 129, 163 to 183, 185 to 205, 219 to 239, 242 to 262, 271 to 291, 299 to 319, 335 to 355, and 359 to 379; these read INSF…LSPM, ILLI…GGIL, YSTA…DGGM, VALW…TSIT, MMAA…GAIV, PMAV…DTEM, FSFM…LGLG, LADG…YAAS, LGGS…NKPT, VLDG…GLLL, ILIP…PVAV, WFIS…VFPM, and LPGA…SLLV. Positions 405 to 486 constitute an RCK C-terminal domain; that stretch reads SGVEIYPSSE…LEALSNLFSQ (82 aa).

Belongs to the monovalent cation:proton antiporter 1 (CPA1) transporter (TC 2.A.36) family. NhaP2 subfamily.

The protein resides in the cell inner membrane. It catalyses the reaction K(+)(in) + H(+)(out) = K(+)(out) + H(+)(in). Functionally, k(+)/H(+) antiporter that extrudes potassium in exchange for external protons and maintains the internal concentration of potassium under toxic levels. The polypeptide is K(+)/H(+) antiporter NhaP2 (Shewanella baltica (strain OS195)).